Consider the following 432-residue polypeptide: Putative D-alanyl-D-alanine carboxypeptidase (432 aa).

A helical; Signal-anchor membrane pass occupies residues 7–25; sequence ATVLLTFSLSAFAVEYPVL.

Belongs to the peptidase S12 family. YfeW subfamily.

Its subcellular location is the cell inner membrane. It carries out the reaction Preferential cleavage: (Ac)2-L-Lys-D-Ala-|-D-Ala. Also transpeptidation of peptidyl-alanyl moieties that are N-acyl substituents of D-alanine.. The protein is Putative D-alanyl-D-alanine carboxypeptidase of Salmonella paratyphi A (strain ATCC 9150 / SARB42).